A 702-amino-acid chain; its full sequence is Dissimilatory sulfite reductase MccA (702 aa).

The N-terminal stretch at 1 to 39 is a signal peptide; it reads MLSGWSVLKGGNMKYWDKALLSLFMCVSTLSIAATHAVA. Heme c contacts are provided by Cys155, Cys158, His159, and His171. Residues Lys220 and Tyr297 each coordinate substrate. The heme c site is built by Cys314, Cys317, His318, Cys351, Cys354, His355, His360, Cys372, Cys375, and His376. Arg378 lines the substrate pocket. Cys411 is a binding site for Cu(+). His423, Cys430, Cys433, His434, His437, Cys474, Cys477, His478, His491, Cys496, Cys499, and His500 together coordinate heme c. Cys507 lines the Cu(+) pocket. The heme c site is built by His528, Cys574, Cys590, His591, and His675.

It belongs to the multiheme cytochrome c family. As to quaternary structure, homotrimer. Cu(+) serves as cofactor. Requires heme c as cofactor.

The protein resides in the periplasm. It catalyses the reaction [protein]-disulfide + hydrogen sulfide + 2 A + 3 H2O = [protein]-dithiol + sulfite + 2 AH2 + H(+). The protein operates within sulfur metabolism; sulfite reduction. In terms of biological role, respiratory sulfite reductase that catalyzes the reduction of sulfite to sulfide in a single step, consuming six electrons in the process. Required for sulfite respiration under anaerobic growth conditions. Has only marginal activity with nitrite. This is Dissimilatory sulfite reductase MccA from Wolinella succinogenes (strain ATCC 29543 / DSM 1740 / CCUG 13145 / JCM 31913 / LMG 7466 / NCTC 11488 / FDC 602W) (Vibrio succinogenes).